The primary structure comprises 212 residues: Pyridoxine/pyridoxamine 5'-phosphate oxidase (212 aa).

Substrate contacts are provided by residues 8–11 (RTNY) and lysine 66. FMN is bound by residues 61-66 (RIVLLK), 76-77 (FT), lysine 83, and glutamine 105. Substrate-binding residues include tyrosine 123, arginine 127, and serine 131. Residues 140 to 141 (QS) and tryptophan 185 each bind FMN. 191-193 (RLH) lines the substrate pocket. Arginine 195 is an FMN binding site.

This sequence belongs to the pyridoxamine 5'-phosphate oxidase family. As to quaternary structure, homodimer. Requires FMN as cofactor.

It carries out the reaction pyridoxamine 5'-phosphate + O2 + H2O = pyridoxal 5'-phosphate + H2O2 + NH4(+). The enzyme catalyses pyridoxine 5'-phosphate + O2 = pyridoxal 5'-phosphate + H2O2. It functions in the pathway cofactor metabolism; pyridoxal 5'-phosphate salvage; pyridoxal 5'-phosphate from pyridoxamine 5'-phosphate: step 1/1. The protein operates within cofactor metabolism; pyridoxal 5'-phosphate salvage; pyridoxal 5'-phosphate from pyridoxine 5'-phosphate: step 1/1. Catalyzes the oxidation of either pyridoxine 5'-phosphate (PNP) or pyridoxamine 5'-phosphate (PMP) into pyridoxal 5'-phosphate (PLP). The sequence is that of Pyridoxine/pyridoxamine 5'-phosphate oxidase from Leptospira biflexa serovar Patoc (strain Patoc 1 / Ames).